The following is a 450-amino-acid chain: Chromosomal replication initiator protein DnaA (450 aa).

The interval 1–79 (MKDSYFDLNT…MEYAYDVAHD (79 aa)) is domain I, interacts with DnaA modulators. The segment at 79–112 (DFFKPELKVIKVVANPVNNQKSNQSNSDFVATDY) is domain II. The segment at 113 to 329 (QLNQNFTFDT…GAFNTLTLMA (217 aa)) is domain III, AAA+ region. Residues G157, G159, K160, and T161 each contribute to the ATP site. Positions 330–450 (RAGRPINVSN…NLSTKIKEKS (121 aa)) are domain IV, binds dsDNA.

Belongs to the DnaA family. In terms of assembly, oligomerizes as a right-handed, spiral filament on DNA at oriC.

It is found in the cytoplasm. Functionally, plays an essential role in the initiation and regulation of chromosomal replication. ATP-DnaA binds to the origin of replication (oriC) to initiate formation of the DNA replication initiation complex once per cell cycle. Binds the DnaA box (a 9 base pair repeat at the origin) and separates the double-stranded (ds)DNA. Forms a right-handed helical filament on oriC DNA; dsDNA binds to the exterior of the filament while single-stranded (ss)DNA is stabiized in the filament's interior. The ATP-DnaA-oriC complex binds and stabilizes one strand of the AT-rich DNA unwinding element (DUE), permitting loading of DNA polymerase. After initiation quickly degrades to an ADP-DnaA complex that is not apt for DNA replication. Binds acidic phospholipids. The polypeptide is Chromosomal replication initiator protein DnaA (Oenococcus oeni (strain ATCC BAA-331 / PSU-1)).